Here is a 335-residue protein sequence, read N- to C-terminus: Urokinase plasminogen activator surface receptor (335 aa).

An N-terminal signal peptide occupies residues 1–22 (MGHPLLLPLLLLLHTCVPASWG). 3 UPAR/Ly6 domains span residues 23 to 114 (LRCM…RSRY), 115 to 213 (LECI…PQNG), and 214 to 305 (HQCY…YRKG). Cystine bridges form between C25/C46, C28/C34, and C39/C67. A glycan (N-linked (GlcNAc...) asparagine) is linked at N74. 11 disulfides stabilise this stretch: C93-C98, C117-C144, C120-C127, C137-C169, C175-C192, C193-C198, C216-C244, C219-C227, C237-C263, C269-C287, and C288-C293. N-linked (GlcNAc...) asparagine glycosylation is found at N184, N194, N222, N255, and N284. The GPI-anchor amidated glycine moiety is linked to residue G305. Positions 306–335 (AAPQPGPAHLSLTITLLMTARLWGGTLLWT) are cleaved as a propeptide — removed in mature form.

Monomer. Interacts (via the UPAR/Ly6 domains) with SRPX2. Interacts with MRC2. Interacts with FAP (seprase); the interaction occurs at the cell surface of invadopodia membrane. Interacts with SORL1 (via N-terminal ectodomain); this interaction decreases PLAUR internalization. The ternary complex composed of PLAUR-PLAU-SERPINE1 also interacts with SORL1.

It localises to the cell membrane. Its subcellular location is the cell projection. The protein resides in the invadopodium membrane. Acts as a receptor for urokinase plasminogen activator. Plays a role in localizing and promoting plasmin formation. Mediates the proteolysis-independent signal transduction activation effects of U-PA. It is subject to negative-feedback regulation by U-PA which cleaves it into an inactive form. This is Urokinase plasminogen activator surface receptor (PLAUR) from Macaca fascicularis (Crab-eating macaque).